Reading from the N-terminus, the 298-residue chain is Syntaxin-4 (298 aa).

Over 1–274 the chain is Cytoplasmic; sequence MRDRTHELRQ…NQKKARKKKV (274 aa). S15, S29, S35, S36, S117, S208, and S248 each carry phosphoserine. The stretch at 38–163 forms a coiled coil; that stretch reads DDEFFQKVQT…ERIRRQLKIT (126 aa). The segment at 154 to 298 is interaction with CENPF; the sequence is ERIRRQLKIT…VIIGITITVG (145 aa). The t-SNARE coiled-coil homology domain maps to 200–262; it reads LNEISARHSE…ERGQEHVKIA (63 aa). Residues 275-295 traverse the membrane as a helical; Anchor for type IV membrane protein segment; the sequence is MIAICVSVTVLILAVIIGITI. Residues 296–298 are Extracellular-facing; it reads TVG.

Belongs to the syntaxin family. In terms of assembly, found in a complex with VAMP8 and SNAP23. Detected in a complex with SNAP23 and STXBP4. Interacts with SNAP23 and SNAPIN. Interacts with VAMP2. Interacts with LLGL1. Interacts (via C-terminus) with CENPF. Interacts with DOC2B. Interacts with STXBP3; excludes interaction with DOC2B and SNAP25. Interacts with STXBP4; excludes interaction with VAMP2. Component of the SNARE complex composed of STX4, SNAP23 and VAMP7 that interacts with SYT7 during lysosomal exocytosis. Interacts with STXBP6. Interacts with STXBP5L. In terms of tissue distribution, expressed in all tissues tested including adipose, brain, testis, intestine, liver, heart, spleen, skeletal muscle and kidney.

Its subcellular location is the cell membrane. It localises to the cell projection. It is found in the neuron projection. The protein localises to the stereocilium. In terms of biological role, plasma membrane t-SNARE that mediates docking of transport vesicles. Necessary for the translocation of SLC2A4 from intracellular vesicles to the plasma membrane. In neurons, recruited at neurite tips to membrane domains rich in the phospholipid 1-oleoyl-2-palmitoyl-PC (OPPC) which promotes neurite tip surface expression of the dopamine transporter SLC6A3/DAT by facilitating fusion of SLC6A3-containing transport vesicles with the plasma membrane. Together with STXB3 and VAMP2, may also play a role in docking/fusion of intracellular GLUT4-containing vesicles with the cell surface in adipocytes and in docking of synaptic vesicles at presynaptic active zones. Required for normal hearing. The sequence is that of Syntaxin-4 (Stx4) from Rattus norvegicus (Rat).